The sequence spans 34 residues: Photosystem II reaction center protein M (34 aa).

A helical membrane pass occupies residues 5–25 (ILGLMAVALFILIPTSFLLIL).

This sequence belongs to the PsbM family. As to quaternary structure, PSII is composed of 1 copy each of membrane proteins PsbA, PsbB, PsbC, PsbD, PsbE, PsbF, PsbH, PsbI, PsbJ, PsbK, PsbL, PsbM, PsbT, PsbX, PsbY, PsbZ, Psb30/Ycf12, at least 3 peripheral proteins of the oxygen-evolving complex and a large number of cofactors. It forms dimeric complexes.

The protein localises to the plastid. It localises to the chloroplast thylakoid membrane. In terms of biological role, one of the components of the core complex of photosystem II (PSII). PSII is a light-driven water:plastoquinone oxidoreductase that uses light energy to abstract electrons from H(2)O, generating O(2) and a proton gradient subsequently used for ATP formation. It consists of a core antenna complex that captures photons, and an electron transfer chain that converts photonic excitation into a charge separation. This subunit is found at the monomer-monomer interface. The polypeptide is Photosystem II reaction center protein M (Tupiella akineta (Green alga)).